We begin with the raw amino-acid sequence, 106 residues long: MKKHPNLLLGFSVYLSAGTKLTIPPEAEQHTAPSDNNKRKRAKCDDPSMIKITSENNKRTRATCDDPWMITITSDNNKRKRAKYCDDPDYDPDYVKKLKVYKVLKL.

The N-terminal stretch at 1–22 is a signal peptide; it reads MKKHPNLLLGFSVYLSAGTKLT. Residues 23-46 form a disordered region; sequence IPPEAEQHTAPSDNNKRKRAKCDD.

This is an uncharacterized protein from Arabidopsis thaliana (Mouse-ear cress).